The chain runs to 695 residues: Nucleoprotein (695 aa).

Coiled coils occupy residues 316 to 341 (VNVG…RRHE) and 372 to 400 (QTLA…EDQG). Disordered stretches follow at residues 426–458 (RSIN…SFVD) and 472–611 (TLEN…EDTR). Over residues 474 to 484 (ENSVMAPSTTL) the composition is skewed to polar residues. Positions 502 to 516 (ISQKKQGNESTDPAR) are enriched in basic and acidic residues. Over residues 529-547 (QEDDESEYTTDSQESDDQP) the composition is skewed to acidic residues. The short motif at 603–606 (PSAP) is the PTAP/PSAP motif element.

This sequence belongs to the filoviruses nucleoprotein family. As to quaternary structure, homooligomer. Homomultimerizes to form the nucleocapsid. Binds to viral genomic RNA. Interacts with VP35 and VP30 to form the nucleocapsid. Also interacts with VP24 and VP40. Post-translationally, phosphorylated.

The protein resides in the virion. It is found in the host cytoplasm. Encapsidates the genome, protecting it from nucleases. The encapsidated genomic RNA is termed the nucleocapsid and serves as template for transcription and replication. During replication, encapsidation by NP is coupled to RNA synthesis and all replicative products are resistant to nucleases. This chain is Nucleoprotein (NP), found in Lake Victoria marburgvirus (strain Ravn-87) (MARV).